The chain runs to 516 residues: Bifunctional purine biosynthesis protein PurH (516 aa).

One can recognise an MGS-like domain in the interval 1-150 (MSDDRKQIKR…KNHPSVAVVV (150 aa)).

This sequence belongs to the PurH family.

The enzyme catalyses (6R)-10-formyltetrahydrofolate + 5-amino-1-(5-phospho-beta-D-ribosyl)imidazole-4-carboxamide = 5-formamido-1-(5-phospho-D-ribosyl)imidazole-4-carboxamide + (6S)-5,6,7,8-tetrahydrofolate. It catalyses the reaction IMP + H2O = 5-formamido-1-(5-phospho-D-ribosyl)imidazole-4-carboxamide. It participates in purine metabolism; IMP biosynthesis via de novo pathway; 5-formamido-1-(5-phospho-D-ribosyl)imidazole-4-carboxamide from 5-amino-1-(5-phospho-D-ribosyl)imidazole-4-carboxamide (10-formyl THF route): step 1/1. The protein operates within purine metabolism; IMP biosynthesis via de novo pathway; IMP from 5-formamido-1-(5-phospho-D-ribosyl)imidazole-4-carboxamide: step 1/1. This is Bifunctional purine biosynthesis protein PurH from Corynebacterium ammoniagenes (Brevibacterium ammoniagenes).